A 344-amino-acid polypeptide reads, in one-letter code: Tripartite motif-containing protein 44 (344 aa).

Disordered regions lie at residues 1 to 25 (MASGVGAAFEELPHDGTCDECEPDE) and 66 to 165 (AWTP…EFDP). The span at 75–92 (GAGKEEAEVKVEQEREIE) shows a compositional bias: basic and acidic residues. Acidic residues predominate over residues 93–165 (SEAGEESESE…ETEAESEFDP (73 aa)). The segment at 174-215 (VAKRKCPDHGLDLSTYCQEDRQLICVLCPVIGAHQGHQLSTL) adopts a B box-type zinc-finger fold. Cys-179, His-182, Cys-201, and His-207 together coordinate Zn(2+). The stretch at 290 to 325 (AHVTEILADIQSHMDRLMTQMAQAKEQLDTSNESAE) forms a coiled coil. The interval 309–344 (QMAQAKEQLDTSNESAEPKAEGDEEGPSGASEEEDT) is disordered. Residues 330–344 (GDEEGPSGASEEEDT) show a composition bias toward acidic residues. A phosphoserine mark is found at Ser-336 and Ser-339.

Interacts (via coiled coil) with TRIM17 (via coiled coil). In terms of tissue distribution, highly expressed in testis.

May play a role in the process of differentiation and maturation of neuronal cells. May regulate the activity of TRIM17. Is a negative regulator of PAX6 expression. The polypeptide is Tripartite motif-containing protein 44 (TRIM44) (Homo sapiens (Human)).